Consider the following 261-residue polypeptide: MAIRHVKRRYSESSESSSSDESVVDSTEISVDINDDDAVKPDNEESQLEGERDMATNDGMENNGCSDLSSDSEDSSSEESDEEPVFQRPIFIKRNQLAEVTDSNNQGNVLRRIEHENKVVEQNEEAKKQIATNYTTDKEILMKAMSLNDNDLIDPEGERLRWLERQKIRKEKYRKKLIDKQLELEEYEANKLLNRDIDKLEENTTTTTGEKDIPIKKSNRINNNKGDNEFKPKRVVNVTFKSLDDNETSAVANEDSEYSIL.

2 disordered regions span residues 1–88 (MAIR…VFQR) and 205–229 (TTTT…GDNE). Residues 13 to 32 (SSESSSSDESVVDSTEISVD) are compositionally biased toward low complexity. Positions 37 to 55 (DAVKPDNEESQLEGERDMA) are enriched in basic and acidic residues. The segment covering 70 to 84 (SDSEDSSSEESDEEP) has biased composition (acidic residues).

The protein belongs to the SPP381 family. Component of the 25S U4/U6.U5 tri-snRNP particle, a subcomplex of the spliceosome.

It localises to the nucleus. Functionally, component of the spliceosome and rRNA processing machinery. In association with the spliceosomal U4/U6.U5 tri-snRNP particle, required for splicing of pre-mRNA. In Vanderwaltozyma polyspora (strain ATCC 22028 / DSM 70294 / BCRC 21397 / CBS 2163 / NBRC 10782 / NRRL Y-8283 / UCD 57-17) (Kluyveromyces polysporus), this protein is Pre-mRNA-splicing factor SPP381 (SPP381).